The following is a 451-amino-acid chain: LisH domain-containing protein C1711.05 (451 aa).

In terms of domain architecture, LisH spans 6–38 (MKSKVCPLIYHFLQENGYVKTAQTFLKETGDKD). The interval 59-394 (PYLTTEDVGK…VGDPSQWDFA (336 aa)) is disordered. The segment covering 73-98 (KESLEKSNDDSQKISKKGAPPEKAHS) has biased composition (basic and acidic residues). A compositionally biased stretch (low complexity) spans 99–120 (SSEASGSGSSSDESDSSSSESE). The span at 135-145 (SESESSSEDSD) shows a compositional bias: acidic residues. Low complexity predominate over residues 146-174 (SSSSSSDSESESSSEGSDSSSSSSSSESE). Residues 189–199 (SESESSSEDSD) show a composition bias toward acidic residues. Positions 200-228 (SSSSSSDSESESSSEGSDSSSSSSSSESE) are enriched in low complexity. Acidic residues-rich tracts occupy residues 243 to 253 (SESESSSEDSD) and 278 to 300 (DSED…EDSD). Over residues 301–319 (STSSSSDSDSSSSSEDGNS) the composition is skewed to low complexity. Residues 320–332 (NTDTTTSGEVSAQ) show a composition bias toward polar residues. A compositionally biased stretch (low complexity) spans 333 to 343 (SSTNSTSSEES). A compositionally biased stretch (basic and acidic residues) spans 344–365 (TSVKDEDSSKIHDKSLKRKHED). A compositionally biased stretch (low complexity) spans 369 to 380 (STSTKSSRTTKT).

Its subcellular location is the nucleus. The protein resides in the nucleolus. In Schizosaccharomyces pombe (strain 972 / ATCC 24843) (Fission yeast), this protein is LisH domain-containing protein C1711.05.